The primary structure comprises 223 residues: Deoxyribose-phosphate aldolase (223 aa).

The Proton donor/acceptor role is filled by Asp91. The active-site Schiff-base intermediate with acetaldehyde is the Lys154. Catalysis depends on Lys183, which acts as the Proton donor/acceptor.

The protein belongs to the DeoC/FbaB aldolase family. DeoC type 1 subfamily.

It is found in the cytoplasm. The enzyme catalyses 2-deoxy-D-ribose 5-phosphate = D-glyceraldehyde 3-phosphate + acetaldehyde. The protein operates within carbohydrate degradation; 2-deoxy-D-ribose 1-phosphate degradation; D-glyceraldehyde 3-phosphate and acetaldehyde from 2-deoxy-alpha-D-ribose 1-phosphate: step 2/2. Its function is as follows. Catalyzes a reversible aldol reaction between acetaldehyde and D-glyceraldehyde 3-phosphate to generate 2-deoxy-D-ribose 5-phosphate. The protein is Deoxyribose-phosphate aldolase of Geobacillus kaustophilus (strain HTA426).